The following is a 238-amino-acid chain: U2 small nuclear ribonucleoprotein A' (238 aa).

4 LRR repeats span residues 19 to 40 (KQVTLSLRSLKIPYLENLGITK), 42 to 63 (TYEVIDLTDNELIELSNFPRLK), 64 to 84 (NLKVLLVGNNNITGINDDKLP), and 89 to 110 (HLQSISFIHNNISKFSDVRILC). An LRRCT domain is found at 123 to 161 (NPITDSPNYRYFIVWLIPTLKVLDFSKVKQKELVKAKEL).

The protein belongs to the U2 small nuclear ribonucleoprotein A family. Associated with the spliceosome.

It localises to the nucleus. Its function is as follows. Involved in pre-mRNA splicing. The protein is U2 small nuclear ribonucleoprotein A' (LEA1) of Debaryomyces hansenii (strain ATCC 36239 / CBS 767 / BCRC 21394 / JCM 1990 / NBRC 0083 / IGC 2968) (Yeast).